Consider the following 363-residue polypeptide: UDP-3-O-acylglucosamine N-acyltransferase (363 aa).

Catalysis depends on histidine 252, which acts as the Proton acceptor.

This sequence belongs to the transferase hexapeptide repeat family. LpxD subfamily. As to quaternary structure, homotrimer.

The catalysed reaction is a UDP-3-O-[(3R)-3-hydroxyacyl]-alpha-D-glucosamine + a (3R)-hydroxyacyl-[ACP] = a UDP-2-N,3-O-bis[(3R)-3-hydroxyacyl]-alpha-D-glucosamine + holo-[ACP] + H(+). The protein operates within bacterial outer membrane biogenesis; LPS lipid A biosynthesis. Catalyzes the N-acylation of UDP-3-O-acylglucosamine using 3-hydroxyacyl-ACP as the acyl donor. Is involved in the biosynthesis of lipid A, a phosphorylated glycolipid that anchors the lipopolysaccharide to the outer membrane of the cell. This Cupriavidus necator (strain ATCC 17699 / DSM 428 / KCTC 22496 / NCIMB 10442 / H16 / Stanier 337) (Ralstonia eutropha) protein is UDP-3-O-acylglucosamine N-acyltransferase.